The sequence spans 105 residues: MMLKPSIDTLLDKVPSKYSLVILQAKRAHELEAGAAPTQSFKSVKSTLQALEEIESGNVVIHPDPAAKRAAIRARIEAERLAREEEERKIKEQIAKEKEEEGEKI.

It belongs to the RNA polymerase subunit omega family. As to quaternary structure, the RNAP catalytic core consists of 2 alpha, 1 beta, 1 beta' and 1 omega subunit. When a sigma factor is associated with the core the holoenzyme is formed, which can initiate transcription.

It carries out the reaction RNA(n) + a ribonucleoside 5'-triphosphate = RNA(n+1) + diphosphate. Promotes RNA polymerase assembly. Latches the N- and C-terminal regions of the beta' subunit thereby facilitating its interaction with the beta and alpha subunits. In Streptococcus equi subsp. equi (strain 4047), this protein is DNA-directed RNA polymerase subunit omega.